The chain runs to 197 residues: MEDINRLLQIRKTVLQMLSDREYIITAYEQEYPRESFVSRENLTMYCVKKDDPTDSIYVFFPDTPKVGVTQIKKYVDIMKDRQANRAIIVVQQNITPFAKQALAEFSQEKKITLEQFNEAELLVNITHHQLVPKHILLTKEEKLELLTRYKMKESQLPRIQTNDPVARYYGLSRGHVVKIVRPSETAGRYITYRLCV.

Belongs to the archaeal Rpo5/eukaryotic RPB5 RNA polymerase subunit family. In terms of assembly, component of the RNA polymerase I (Pol I), RNA polymerase II (Pol II) and RNA polymerase III (Pol III) complexes consisting of at least 13, 12 and 17 subunits, respectively. In RNA Pol II, this subunit is present in 2-fold molar excess over the other subunits.

Its subcellular location is the nucleus. Its function is as follows. DNA-dependent RNA polymerase catalyzes the transcription of DNA into RNA using the four ribonucleoside triphosphates as substrates. Common component of RNA polymerases I, II and III which synthesize ribosomal RNA precursors, mRNA precursors and many functional non-coding RNAs, and small RNAs, such as 5S rRNA and tRNAs, respectively. Pol II is the central component of the basal RNA polymerase II transcription machinery. Pols are composed of mobile elements that move relative to each other. In Pol II, RPB5 is part of the lower jaw surrounding the central large cleft and thought to grab the incoming DNA template. Seems to be the major component in this process. This chain is DNA-directed RNA polymerases I, II, and III subunit rpabc1 (polr2e), found in Dictyostelium discoideum (Social amoeba).